The sequence spans 331 residues: UPF0324 membrane protein SA0329 (331 aa).

The next 11 membrane-spanning stretches (helical) occupy residues 9–26, 31–48, 69–88, 93–115, 122–144, 154–176, 183–202, 217–234, 247–269, 273–295, and 308–330; these read FMIG…SFLA, ILDK…AILY, LLRF…DIIG, LLAI…NKLL, ALLL…APIF, SIGI…YAIF, YGAW…LAGG, LGRV…ILIM, ISIP…VTIP, LNIL…GLNV, and LMTI…HWLY.

The protein belongs to the UPF0324 family.

It is found in the cell membrane. The sequence is that of UPF0324 membrane protein SA0329 from Staphylococcus aureus (strain N315).